The chain runs to 276 residues: Small ribosomal subunit protein uS3 (276 aa).

The KH type-2 domain occupies 43–111 (IRQLMSTGME…QVQLNILEVK (69 aa)). The span at 218-227 (AQAASAPSRG) shows a compositional bias: low complexity. The tract at residues 218 to 276 (AQAASAPSRGPRSDRGGRPGGADRGDRRRRNDRPAADAAPAAEAPAVEAAPAAAEGGQA) is disordered. Residues 228 to 243 (PRSDRGGRPGGADRGD) show a composition bias toward basic and acidic residues. The span at 253–276 (ADAAPAAEAPAVEAAPAAAEGGQA) shows a compositional bias: low complexity.

The protein belongs to the universal ribosomal protein uS3 family. As to quaternary structure, part of the 30S ribosomal subunit. Forms a tight complex with proteins S10 and S14.

Functionally, binds the lower part of the 30S subunit head. Binds mRNA in the 70S ribosome, positioning it for translation. This is Small ribosomal subunit protein uS3 from Pseudarthrobacter chlorophenolicus (strain ATCC 700700 / DSM 12829 / CIP 107037 / JCM 12360 / KCTC 9906 / NCIMB 13794 / A6) (Arthrobacter chlorophenolicus).